A 149-amino-acid polypeptide reads, in one-letter code: Lipoprotein signal peptidase (149 aa).

The next 3 membrane-spanning stretches (helical) occupy residues 24–44 (SHIA…LTNL), 57–77 (KMWF…YLLW), and 81–101 (GKWL…GNFI). Active-site residues include Asp-111 and Asp-127. Residues 122 to 142 (IFNFADSCLTVGVIFILIGVL) traverse the membrane as a helical segment.

It belongs to the peptidase A8 family.

The protein resides in the cell membrane. It carries out the reaction Release of signal peptides from bacterial membrane prolipoproteins. Hydrolyzes -Xaa-Yaa-Zaa-|-(S,diacylglyceryl)Cys-, in which Xaa is hydrophobic (preferably Leu), and Yaa (Ala or Ser) and Zaa (Gly or Ala) have small, neutral side chains.. It functions in the pathway protein modification; lipoprotein biosynthesis (signal peptide cleavage). Functionally, this protein specifically catalyzes the removal of signal peptides from prolipoproteins. The protein is Lipoprotein signal peptidase of Lactiplantibacillus plantarum (strain ATCC BAA-793 / NCIMB 8826 / WCFS1) (Lactobacillus plantarum).